The primary structure comprises 348 residues: Dihydroorotase (348 aa).

Zn(2+)-binding residues include His17 and His19. Residues 19–21 (HLR) and Asn45 each bind substrate. 3 residues coordinate Zn(2+): Lys103, His140, and His178. Lys103 bears the N6-carboxylysine mark. Position 140 (His140) interacts with substrate. A substrate-binding site is contributed by Leu223. Residue Asp251 coordinates Zn(2+). Asp251 is a catalytic residue. Residues His255 and Ala267 each coordinate substrate.

It belongs to the metallo-dependent hydrolases superfamily. DHOase family. Class II DHOase subfamily. As to quaternary structure, homodimer. Requires Zn(2+) as cofactor.

The enzyme catalyses (S)-dihydroorotate + H2O = N-carbamoyl-L-aspartate + H(+). The protein operates within pyrimidine metabolism; UMP biosynthesis via de novo pathway; (S)-dihydroorotate from bicarbonate: step 3/3. Its function is as follows. Catalyzes the reversible cyclization of carbamoyl aspartate to dihydroorotate. This is Dihydroorotase from Escherichia coli O157:H7.